We begin with the raw amino-acid sequence, 796 residues long: Polyribonucleotide nucleotidyltransferase (796 aa).

Mg(2+) is bound by residues D490 and D496. In terms of domain architecture, KH spans 557–616 (PRIESIFINKDKIRNVIGSGGKNIRDICEKTGAKIEIIQDGTVMIYAVNNEAVEYAKSMI). The 68-residue stretch at 626-693 (GKVFEGTVVE…DREHIQLSMR (68 aa)) folds into the S1 motif domain. Composition is skewed to low complexity over residues 717 to 728 (DDSCGSTGGSSF), 747 to 759 (GGSS…NSNG), and 769 to 784 (SSNG…SNSR). Residues 717–796 (DDSCGSTGGS…HDVPRKPRFF (80 aa)) are disordered. Basic and acidic residues predominate over residues 785–796 (NGHDVPRKPRFF).

The protein belongs to the polyribonucleotide nucleotidyltransferase family. The cofactor is Mg(2+).

The protein resides in the cytoplasm. It carries out the reaction RNA(n+1) + phosphate = RNA(n) + a ribonucleoside 5'-diphosphate. Its function is as follows. Involved in mRNA degradation. Catalyzes the phosphorolysis of single-stranded polyribonucleotides processively in the 3'- to 5'-direction. The protein is Polyribonucleotide nucleotidyltransferase of Ehrlichia chaffeensis (strain ATCC CRL-10679 / Arkansas).